A 777-amino-acid chain; its full sequence is Intraflagellar transport protein 80 homolog (777 aa).

7 WD repeats span residues 12–50, 104–143, 145–185, 186–225, 227–265, 267–306, and 504–542; these read KHQE…TSLI, AHCG…RSTL, QQGT…LQWK, AHDG…LYGS, PHEH…YALE, PNTG…WEWK, and KLGT…YVDR.

As to quaternary structure, component of the IFT complex B, at least composed of IFT20, IFT22, IFT25, IFT27, IFT46, IFT52, TRAF3IP1/IFT54, IFT57, IFT74, IFT80, IFT81, and IFT88. Interacts with IFT88. Interacts with IFT57 and IFT70B.

It is found in the cytoplasm. It localises to the cytoskeleton. The protein resides in the cilium basal body. Its subcellular location is the cilium axoneme. Component of the intraflagellar transport (IFT) complex B, which is essential for the development and maintenance of motile and sensory cilia. This Mus musculus (Mouse) protein is Intraflagellar transport protein 80 homolog (Ift80).